The primary structure comprises 402 residues: Aminotransferase-like protein FGM3 (402 aa).

Pyridoxal 5'-phosphate is bound by residues 137-138 (TI), D218, and 282-283 (FG).

Belongs to the class-V pyridoxal-phosphate-dependent aminotransferase family. Csd subfamily.

In terms of biological role, aminotransferase-like protein; part of the Fg3_54/C64 gene cluster that mediates the biosynthesis of the octapeptide fusaoctaxin A, a virulence factor that is required for cell-to-cell invasiveness of plant host. The 2 nonribosomal peptide synthetases NRPS9 and NRPS5 form an assembly line which likely utilizes GABA as a starter unit (loaded on the unique module M1 of NRPS9) and sequentially incorporates seven extender units composed of the residues L-Ala, L-allo-Ile, L-Ser, L-Val, L-Ser, L-Leu and L-Leu, respectively. During the process, each of the residues that are tethered on modules M3-M7 of NRPS5 containing an E domain can undergo an epimerization reaction to produce a D-configuration before the transpeptidation reaction occurs. The elongation of the peptidyl chain might be terminated by module M8-mediated L-Leu incorporation, followed by R domain-catalyzed 4 electron reduction to release the resulting octapeptide from the assembly line as an alcohol. Fusaoctaxin A is cleaved by the cluster specific ABC transporter FGM5 to the pentapeptide fusapentaxin A and the tripeptide fusatrixin A. The other enzymes from the cluster, FGM1, FGM2, FGM3 and FGM9 seem not to be involved in the biosynthesis of fusaoctaxin A and their functions have still to be determined. The sequence is that of Aminotransferase-like protein FGM3 from Gibberella zeae (strain ATCC MYA-4620 / CBS 123657 / FGSC 9075 / NRRL 31084 / PH-1) (Wheat head blight fungus).